We begin with the raw amino-acid sequence, 309 residues long: Acetyl-coenzyme A carboxylase carboxyl transferase subunit beta (309 aa).

Residues 27-296 (LWKKCPKCGA…PGTEAPIEFE (270 aa)) form the CoA carboxyltransferase N-terminal domain. Cys31, Cys34, Cys50, and Cys53 together coordinate Zn(2+). The C4-type zinc finger occupies 31-53 (CPKCGAFLYKPELEKNLDVCPKC). Positions 288 to 309 (GTEAPIEFEVTEKPDVDEPEGQ) are disordered.

The protein belongs to the AccD/PCCB family. In terms of assembly, acetyl-CoA carboxylase is a heterohexamer composed of biotin carboxyl carrier protein (AccB), biotin carboxylase (AccC) and two subunits each of ACCase subunit alpha (AccA) and ACCase subunit beta (AccD). Zn(2+) is required as a cofactor.

The protein localises to the cytoplasm. It catalyses the reaction N(6)-carboxybiotinyl-L-lysyl-[protein] + acetyl-CoA = N(6)-biotinyl-L-lysyl-[protein] + malonyl-CoA. Its pathway is lipid metabolism; malonyl-CoA biosynthesis; malonyl-CoA from acetyl-CoA: step 1/1. Its function is as follows. Component of the acetyl coenzyme A carboxylase (ACC) complex. Biotin carboxylase (BC) catalyzes the carboxylation of biotin on its carrier protein (BCCP) and then the CO(2) group is transferred by the transcarboxylase to acetyl-CoA to form malonyl-CoA. The protein is Acetyl-coenzyme A carboxylase carboxyl transferase subunit beta of Marinobacter nauticus (strain ATCC 700491 / DSM 11845 / VT8) (Marinobacter aquaeolei).